The chain runs to 344 residues: Meiotic recombination protein DMC1 homolog A (344 aa).

Position 133–140 (Gly133–Thr140) interacts with ATP. Arg235 contacts dsDNA. SsDNA is bound by residues Arg235, Phe238, Arg241, Arg247, and Arg315. DsDNA is bound by residues Arg241 and Arg247.

This sequence belongs to the RecA family. DMC1 subfamily. In terms of tissue distribution, expressed in pollen mother cells and root tips.

The protein resides in the nucleus. In terms of biological role, recombinase that may participate in meiotic recombination, specifically in homologous strand assimilation, which is required for the resolution of meiotic double-strand breaks. Exhibits DNA-dependent ATPase activity when bound to single-stranded DNA (ssDNA). Mediates renaturation of homologous complementary strands as well as assimilation of single strands into homologous supercoiled duplexes leading to D-loop formation. Binds circular single-stranded DNA (ssDNA) and circular double-stranded DNA (dsDNA) in vitro. Catalyzes DNA homologous renaturation and DNA strand exchange. The rates of these activities are dependent on the state of ATP hydrolysis. Forms helical filaments along ssDNA and dsDNA, and promotes strand exchange between ssDNA and dsDNA with long DNA substrates of several thousand base pairs. The presence of the replication protein A is not required for this activity. Seems to be required for homologous pairing and subsequent chromosome segregation during male meiosis. May be not directly required for homologous pairing during male meiosis. Required for synaptonemal complex assembly and crossover formation. Functions redundantly with DMC1B. This chain is Meiotic recombination protein DMC1 homolog A, found in Oryza sativa subsp. indica (Rice).